Here is a 159-residue protein sequence, read N- to C-terminus: MEHDERTHVPVELRAAGVVLLNERGDILLVQEKGIPGHPEKAGLWHIPSGAVEDGENPQDAAVREACEETGLRVRPVKFLGAYLGRFPDGVLILRHVWLAEPEPGQTLAPAFTDEIAEASFVSREDFAQLYAAGQIRMYQTKLFYADALREKGFPALPV.

3 residues coordinate Mg(2+): methionine 1, arginine 14, and serine 49. 1-6 is an ATP binding site; it reads MEHDER. One can recognise a Nudix hydrolase domain in the interval 11–144; it reads VELRAAGVVL…QIRMYQTKLF (134 aa). ATP is bound at residue 50-51; that stretch reads GA. A Nudix box motif is present at residues 50–71; it reads GAVEDGENPQDAAVREACEETG. Positions 53 and 65 each coordinate Mg(2+). 87-89 is an ATP binding site; that stretch reads FPD. Arginine 95 serves as a coordination point for Mg(2+).

It belongs to the Nudix hydrolase family. Homodimer. Mg(2+) serves as cofactor.

The enzyme catalyses 8-oxo-dGTP + H2O = 8-oxo-dGDP + phosphate + H(+). It catalyses the reaction 8-oxo-GTP + H2O = 8-oxo-GDP + phosphate + H(+). The catalysed reaction is P(1),P(4)-bis(5'-adenosyl) tetraphosphate + H2O = AMP + ATP + 2 H(+). Functionally, hydrolase that can act as a nucleoside triphosphatase and a dinucleoside polyphosphate pyrophosphatase. The best substrates are 8-oxo-dGTP and 8-oxo-GTP. Other substrates include Ap4A, dGTP and GTP. May be involved in protection from damage caused by radiation. This Deinococcus radiodurans (strain ATCC 13939 / DSM 20539 / JCM 16871 / CCUG 27074 / LMG 4051 / NBRC 15346 / NCIMB 9279 / VKM B-1422 / R1) protein is Nudix hydrolase DR_1025.